A 490-amino-acid polypeptide reads, in one-letter code: Betaine aldehyde dehydrogenase (490 aa).

The K(+) site is built by Ser26, Ile27, and Asp93. 150–152 (GAW) is a binding site for NAD(+). Lys162 acts as the Charge relay system in catalysis. Residues 176 to 179 (KPSE) and 230 to 233 (GVET) each bind NAD(+). Leu246 provides a ligand contact to K(+). The active-site Proton acceptor is the Glu252. The NAD(+) site is built by Gly254, Cys286, and Glu387. Catalysis depends on Cys286, which acts as the Nucleophile. The residue at position 286 (Cys286) is a Cysteine sulfenic acid (-SOH). K(+)-binding residues include Lys457 and Gly460. Glu464 functions as the Charge relay system in the catalytic mechanism.

Belongs to the aldehyde dehydrogenase family. Dimer of dimers. K(+) is required as a cofactor.

It catalyses the reaction betaine aldehyde + NAD(+) + H2O = glycine betaine + NADH + 2 H(+). Its pathway is amine and polyamine biosynthesis; betaine biosynthesis via choline pathway; betaine from betaine aldehyde: step 1/1. Involved in the biosynthesis of the osmoprotectant glycine betaine. Catalyzes the irreversible oxidation of betaine aldehyde to the corresponding acid. The sequence is that of Betaine aldehyde dehydrogenase from Acinetobacter baumannii (strain ACICU).